A 329-amino-acid chain; its full sequence is 4-hydroxythreonine-4-phosphate dehydrogenase (329 aa).

Positions 136 and 137 each coordinate substrate. Residues H166, H211, and H266 each contribute to the a divalent metal cation site. Positions 274, 283, and 292 each coordinate substrate.

The protein belongs to the PdxA family. In terms of assembly, homodimer. Requires Zn(2+) as cofactor. Mg(2+) is required as a cofactor. The cofactor is Co(2+).

Its subcellular location is the cytoplasm. The enzyme catalyses 4-(phosphooxy)-L-threonine + NAD(+) = 3-amino-2-oxopropyl phosphate + CO2 + NADH. It participates in cofactor biosynthesis; pyridoxine 5'-phosphate biosynthesis; pyridoxine 5'-phosphate from D-erythrose 4-phosphate: step 4/5. Its function is as follows. Catalyzes the NAD(P)-dependent oxidation of 4-(phosphooxy)-L-threonine (HTP) into 2-amino-3-oxo-4-(phosphooxy)butyric acid which spontaneously decarboxylates to form 3-amino-2-oxopropyl phosphate (AHAP). The protein is 4-hydroxythreonine-4-phosphate dehydrogenase of Escherichia fergusonii (strain ATCC 35469 / DSM 13698 / CCUG 18766 / IAM 14443 / JCM 21226 / LMG 7866 / NBRC 102419 / NCTC 12128 / CDC 0568-73).